Reading from the N-terminus, the 96-residue chain is Co-chaperonin GroES (96 aa).

This sequence belongs to the GroES chaperonin family. Heptamer of 7 subunits arranged in a ring. Interacts with the chaperonin GroEL.

The protein localises to the cytoplasm. In terms of biological role, together with the chaperonin GroEL, plays an essential role in assisting protein folding. The GroEL-GroES system forms a nano-cage that allows encapsulation of the non-native substrate proteins and provides a physical environment optimized to promote and accelerate protein folding. GroES binds to the apical surface of the GroEL ring, thereby capping the opening of the GroEL channel. The protein is Co-chaperonin GroES of Leptospira interrogans serogroup Icterohaemorrhagiae serovar copenhageni (strain Fiocruz L1-130).